A 237-amino-acid chain; its full sequence is Flagellar brake protein YcgR (237 aa).

Positions 108–225 (QRRRQFRVTT…MERKIQSAVF (118 aa)) constitute a PilZ domain.

It belongs to the YcgR family. As to quaternary structure, monomer. Interacts with the flagellar basal bodies.

The protein resides in the bacterial flagellum basal body. Its function is as follows. Acts as a flagellar brake, regulating swimming and swarming in a bis-(3'-5') cyclic diguanylic acid (c-di-GMP)-dependent manner. Binds 1 c-di-GMP dimer per subunit. Increasing levels of c-di-GMP lead to decreased motility. The protein is Flagellar brake protein YcgR of Serratia proteamaculans (strain 568).